The sequence spans 200 residues: Large ribosomal subunit protein uL4 (200 aa).

Residues 43 to 71 are disordered; it reads RAQKTRAEVSGSGKKPWRQKGTGRARSGD.

It belongs to the universal ribosomal protein uL4 family. As to quaternary structure, part of the 50S ribosomal subunit.

In terms of biological role, one of the primary rRNA binding proteins, this protein initially binds near the 5'-end of the 23S rRNA. It is important during the early stages of 50S assembly. It makes multiple contacts with different domains of the 23S rRNA in the assembled 50S subunit and ribosome. Its function is as follows. Forms part of the polypeptide exit tunnel. The chain is Large ribosomal subunit protein uL4 from Histophilus somni (strain 129Pt) (Haemophilus somnus).